We begin with the raw amino-acid sequence, 107 residues long: Large ribosomal subunit protein uL18c (107 aa).

It belongs to the universal ribosomal protein uL18 family. Part of the 50S ribosomal subunit; contacts the 5S rRNA.

The protein resides in the plastid. It is found in the chloroplast. Its function is as follows. Binds 5S rRNA, forms part of the central protuberance of the 50S subunit. In Guillardia theta (Cryptophyte), this protein is Large ribosomal subunit protein uL18c (rpl18).